The chain runs to 148 residues: Early glycoprotein GP48 (148 aa).

Residues 1–21 (MMLRAWRLMVLLAAYCYYVFA) form the signal peptide. N-linked (GlcNAc...) asparagine; by host glycosylation is found at asparagine 22, asparagine 44, asparagine 49, asparagine 57, asparagine 65, asparagine 104, asparagine 108, asparagine 118, asparagine 135, and asparagine 144.

It belongs to the RL11 family. Post-translationally, N-glycosylated and possibly O-glycosylated.

The protein resides in the virion membrane. In Homo sapiens (Human), this protein is Early glycoprotein GP48 (UL4).